We begin with the raw amino-acid sequence, 959 residues long: General transcription factor II-I repeat domain-containing protein 1 (959 aa).

Glycyl lysine isopeptide (Lys-Gly) (interchain with G-Cter in SUMO2) cross-links involve residues Lys27 and Lys94. Basic and acidic residues predominate over residues 96–106 (PEAEHPKKVQR). Positions 96 to 117 (PEAEHPKKVQRGEGGGRSLPRS) are disordered. The stretch at 119 to 213 (LEHGSDVYLL…LEDGGRDSKA (95 aa)) is one GTF2I-like 1 repeat. Glycyl lysine isopeptide (Lys-Gly) (interchain with G-Cter in SUMO2) cross-links involve residues Lys184, Lys212, Lys225, Lys238, Lys271, Lys294, Lys308, Lys337, Lys436, Lys439, and Lys443. The interval 230–250 (CGLHGQAPKVPPQDLPPTATS) is disordered. A GTF2I-like 2 repeat occupies 342–436 (IKETEDINTL…FDERIFTGNK (95 aa)). Ser448 carries the phosphoserine modification. Residues 468–492 (NARSDKGSMSEDCGPGTSGELGGLR) form a disordered region. One copy of the GTF2I-like 3 repeat lies at 556–650 (DSHGDVIRPL…ELLTEGVKEP (95 aa)). Glycyl lysine isopeptide (Lys-Gly) (interchain with G-Cter in SUMO2) cross-links involve residues Lys567, Lys579, Lys588, Lys622, Lys638, and Lys648. Residue Ser654 is modified to Phosphoserine. Positions 654 to 679 (SQGTASSLGFSPPALPPERDSGDPLV) are disordered. Residues Pro669, Pro670, Asp680, and Lys684 each participate in a glycyl lysine isopeptide (Lys-Gly) (interchain with G-Cter in SUMO2) cross-link. Phosphoserine is present on Gln686. GTF2I-like repeat units follow at residues 696–790 (LSRI…KPDE) and 793–887 (ANRL…ICND). Residues Ile701, Lys724, Lys732, Lys772, Lys774, Lys787, Lys829, Lys889, and Lys893 each participate in a glycyl lysine isopeptide (Lys-Gly) (interchain with G-Cter in SUMO2) cross-link. The interval 892 to 927 (AKDSSIPKRKRKRVSEGNSVSSSSSSSSSSSSNPDS) is disordered. Residues 898–905 (PKRKRKRV) carry the Nuclear localization signal motif. Over residues 910–923 (SVSSSSSSSSSSSS) the composition is skewed to low complexity.

This sequence belongs to the TFII-I family. In terms of assembly, interacts with the retinoblastoma protein (RB1) via its C-terminus. As to expression, highly expressed in adult skeletal muscle, heart, fibroblast, bone and fetal tissues. Expressed at lower levels in all other tissues tested.

The protein resides in the nucleus. In terms of biological role, may be a transcription regulator involved in cell-cycle progression and skeletal muscle differentiation. May repress GTF2I transcriptional functions, by preventing its nuclear residency, or by inhibiting its transcriptional activation. May contribute to slow-twitch fiber type specificity during myogenesis and in regenerating muscles. Binds troponin I slow-muscle fiber enhancer (USE B1). Binds specifically and with high affinity to the EFG sequences derived from the early enhancer of HOXC8. This chain is General transcription factor II-I repeat domain-containing protein 1 (GTF2IRD1), found in Homo sapiens (Human).